A 182-amino-acid polypeptide reads, in one-letter code: ATP synthase subunit b, chloroplastic (182 aa).

The chain crosses the membrane as a helical span at residues 33–51 (VLNIAILLSGVIYLGRNFL).

It belongs to the ATPase B chain family. In terms of assembly, F-type ATPases have 2 components, F(1) - the catalytic core - and F(0) - the membrane proton channel. F(1) has five subunits: alpha(3), beta(3), gamma(1), delta(1), epsilon(1). F(0) has four main subunits: a(1), b(1), b'(1) and c(10-14). The alpha and beta chains form an alternating ring which encloses part of the gamma chain. F(1) is attached to F(0) by a central stalk formed by the gamma and epsilon chains, while a peripheral stalk is formed by the delta, b and b' chains.

The protein resides in the plastid. It localises to the chloroplast thylakoid membrane. In terms of biological role, f(1)F(0) ATP synthase produces ATP from ADP in the presence of a proton or sodium gradient. F-type ATPases consist of two structural domains, F(1) containing the extramembraneous catalytic core and F(0) containing the membrane proton channel, linked together by a central stalk and a peripheral stalk. During catalysis, ATP synthesis in the catalytic domain of F(1) is coupled via a rotary mechanism of the central stalk subunits to proton translocation. Functionally, component of the F(0) channel, it forms part of the peripheral stalk, linking F(1) to F(0). This is ATP synthase subunit b, chloroplastic from Guillardia theta (Cryptophyte).